A 287-amino-acid polypeptide reads, in one-letter code: Arylamine N-acetyltransferase, liver isozyme (287 aa).

The active-site Acyl-thioester intermediate is C68. Residues H107 and D122 contribute to the active site.

The protein belongs to the arylamine N-acetyltransferase family.

It carries out the reaction an arylamine + acetyl-CoA = an N-acetylarylamine + CoA. The chain is Arylamine N-acetyltransferase, liver isozyme from Gallus gallus (Chicken).